A 297-amino-acid polypeptide reads, in one-letter code: D-aminoacyl-tRNA deacylase (297 aa).

Belongs to the DtdA deacylase family. In terms of assembly, monomer. Zn(2+) is required as a cofactor.

It carries out the reaction a D-aminoacyl-tRNA + H2O = a tRNA + a D-alpha-amino acid + H(+). The enzyme catalyses glycyl-tRNA(Ala) + H2O = tRNA(Ala) + glycine + H(+). Its function is as follows. D-aminoacyl-tRNA deacylase with broad substrate specificity. By recycling D-aminoacyl-tRNA to D-amino acids and free tRNA molecules, this enzyme counteracts the toxicity associated with the formation of D-aminoacyl-tRNA entities in vivo. The polypeptide is D-aminoacyl-tRNA deacylase (Methanosarcina acetivorans (strain ATCC 35395 / DSM 2834 / JCM 12185 / C2A)).